Consider the following 215-residue polypeptide: 3-dehydroquinate dehydratase (215 aa).

3-dehydroquinate-binding positions include serine 6, glutamate 31 to arginine 33, and arginine 64. Residue histidine 111 is the Proton donor/acceptor of the active site. The active-site Schiff-base intermediate with substrate is lysine 138. Positions 174, 193, and 197 each coordinate 3-dehydroquinate.

Belongs to the type-I 3-dehydroquinase family. Homodimer.

It catalyses the reaction 3-dehydroquinate = 3-dehydroshikimate + H2O. The protein operates within metabolic intermediate biosynthesis; chorismate biosynthesis; chorismate from D-erythrose 4-phosphate and phosphoenolpyruvate: step 3/7. Its function is as follows. Involved in the third step of the chorismate pathway, which leads to the biosynthesis of aromatic amino acids. Catalyzes the cis-dehydration of 3-dehydroquinate (DHQ) and introduces the first double bond of the aromatic ring to yield 3-dehydroshikimate. The polypeptide is 3-dehydroquinate dehydratase (Ignicoccus hospitalis (strain KIN4/I / DSM 18386 / JCM 14125)).